Consider the following 105-residue polypeptide: Cell division protein FtsL (105 aa).

Topologically, residues 1–22 are cytoplasmic; the sequence is MIGNERHGLVGVIGADLIRNAK. A helical transmembrane segment spans residues 23–43; it reads IPLILLVAVLISAVLVVTTAH. At 44-105 the chain is on the periplasmic side; that stretch reads RTRLLTAERE…DPSQENIVIK (62 aa).

It belongs to the FtsL family. In terms of assembly, part of a complex composed of FtsB, FtsL and FtsQ.

It is found in the cell inner membrane. Functionally, essential cell division protein. May link together the upstream cell division proteins, which are predominantly cytoplasmic, with the downstream cell division proteins, which are predominantly periplasmic. This is Cell division protein FtsL from Yersinia pestis.